A 258-amino-acid polypeptide reads, in one-letter code: MNAFDFLTPPRSGKPRKNGITMVLDKGMGPASARDLMEISSDYVDFIKFGWGTLPLHRRDTVKEKVDMYRSFDVEPYPGGTLFEIAHLNDKVEEYFQEARSLGFETLEISNGTVEIETEEKCRLIEMAVDEGFMVLSEVGKKDPERDRLLEPDDRVRLVRADLRAGASMVLMEARESGQNIGIYDERGNIREDEFNHLTDRLPMDRIIWEAPQKSQQVYFILKIGPDVNLGNIPPEEITALETIRRGLRGDTLGKVNL.

It belongs to the phosphosulfolactate synthase family.

It catalyses the reaction (2R)-O-phospho-3-sulfolactate = phosphoenolpyruvate + sulfite + H(+). It functions in the pathway cofactor biosynthesis; coenzyme M biosynthesis; sulfoacetaldehyde from phosphoenolpyruvate and sulfite: step 1/4. Catalyzes the addition of sulfite to phosphoenolpyruvate (PEP) to yield (2R)-phospho-3-sulfolactate (PSL). This Methanothermobacter thermautotrophicus (strain ATCC 29096 / DSM 1053 / JCM 10044 / NBRC 100330 / Delta H) (Methanobacterium thermoautotrophicum) protein is Phosphosulfolactate synthase (comA).